Consider the following 384-residue polypeptide: DNA replication and repair protein RecF (384 aa).

Gly30 to Thr37 contributes to the ATP binding site.

Belongs to the RecF family.

Its subcellular location is the cytoplasm. The RecF protein is involved in DNA metabolism; it is required for DNA replication and normal SOS inducibility. RecF binds preferentially to single-stranded, linear DNA. It also seems to bind ATP. This chain is DNA replication and repair protein RecF, found in Levilactobacillus brevis (strain ATCC 367 / BCRC 12310 / CIP 105137 / JCM 1170 / LMG 11437 / NCIMB 947 / NCTC 947) (Lactobacillus brevis).